The primary structure comprises 545 residues: Sensory neuron membrane protein 1 (545 aa).

Residues 1 to 10 are Cytoplasmic-facing; the sequence is MELKERNFKK. Residues 11 to 31 traverse the membrane as a helical segment; the sequence is IGLICVAVLLCGMVFSYGIFP. Topologically, residues 32–464 are extracellular; it reads SILRFMIKQN…LFLGLKFNAT (433 aa). Asn69, Asn214, and Asn227 each carry an N-linked (GlcNAc...) asparagine glycan. Disulfide bonds link Cys266-Cys331, Cys295-Cys351, and Cys333-Cys340. N-linked (GlcNAc...) asparagine glycans are attached at residues Asn444 and Asn462. Residues 465 to 485 form a helical membrane-spanning segment; the sequence is VKWLTIIIGTVGAVGSAYMYF. Over 486 to 545 the chain is Cytoplasmic; sequence RKETKTTDVAPVDVSTPDTNPSSAKDGVVNVSLGRNLPPVIDGLDKPPKLRATELQQERY.

Belongs to the CD36 family. As to expression, selectively expressed in antenna.

Its subcellular location is the cell membrane. Functionally, plays an olfactory role that is not restricted to pheromone sensitivity. The protein is Sensory neuron membrane protein 1 (snmp1) of Anopheles gambiae (African malaria mosquito).